We begin with the raw amino-acid sequence, 259 residues long: Adenosylcobinamide-GDP ribazoletransferase (259 aa).

Helical transmembrane passes span Asn-9 to Val-29, Leu-43 to Val-63, Ser-64 to His-84, Ala-118 to Phe-138, Val-143 to Phe-163, and Ile-190 to Leu-210.

It belongs to the CobS family. Mg(2+) is required as a cofactor.

The protein localises to the cell inner membrane. The catalysed reaction is alpha-ribazole + adenosylcob(III)inamide-GDP = adenosylcob(III)alamin + GMP + H(+). It catalyses the reaction alpha-ribazole 5'-phosphate + adenosylcob(III)inamide-GDP = adenosylcob(III)alamin 5'-phosphate + GMP + H(+). It participates in cofactor biosynthesis; adenosylcobalamin biosynthesis; adenosylcobalamin from cob(II)yrinate a,c-diamide: step 7/7. Joins adenosylcobinamide-GDP and alpha-ribazole to generate adenosylcobalamin (Ado-cobalamin). Also synthesizes adenosylcobalamin 5'-phosphate from adenosylcobinamide-GDP and alpha-ribazole 5'-phosphate. This is Adenosylcobinamide-GDP ribazoletransferase from Shewanella pealeana (strain ATCC 700345 / ANG-SQ1).